We begin with the raw amino-acid sequence, 130 residues long: Fluoride-specific ion channel FluC (130 aa).

4 helical membrane-spanning segments follow: residues 3–23 (FVFL…YFVG), 38–58 (LGTF…GHLA), 67–87 (FGIF…SYGL), and 102–122 (ISYV…GWFL). Positions 77 and 80 each coordinate Na(+).

This sequence belongs to the fluoride channel Fluc/FEX (TC 1.A.43) family.

It is found in the cell inner membrane. It catalyses the reaction fluoride(in) = fluoride(out). With respect to regulation, na(+) is not transported, but it plays an essential structural role and its presence is essential for fluoride channel function. Fluoride-specific ion channel. Important for reducing fluoride concentration in the cell, thus reducing its toxicity. The chain is Fluoride-specific ion channel FluC from Helicobacter pylori (strain G27).